Reading from the N-terminus, the 293-residue chain is Pyridoxal 5'-phosphate synthase subunit PdxS (293 aa).

Residue Asp-23 coordinates D-ribose 5-phosphate. The active-site Schiff-base intermediate with D-ribose 5-phosphate is Lys-80. Gly-152 provides a ligand contact to D-ribose 5-phosphate. Arg-164 is a binding site for D-glyceraldehyde 3-phosphate. D-ribose 5-phosphate-binding positions include Gly-213 and 234-235 (GS).

This sequence belongs to the PdxS/SNZ family. In the presence of PdxT, forms a dodecamer of heterodimers.

It carries out the reaction aldehydo-D-ribose 5-phosphate + D-glyceraldehyde 3-phosphate + L-glutamine = pyridoxal 5'-phosphate + L-glutamate + phosphate + 3 H2O + H(+). Its pathway is cofactor biosynthesis; pyridoxal 5'-phosphate biosynthesis. Its function is as follows. Catalyzes the formation of pyridoxal 5'-phosphate from ribose 5-phosphate (RBP), glyceraldehyde 3-phosphate (G3P) and ammonia. The ammonia is provided by the PdxT subunit. Can also use ribulose 5-phosphate and dihydroxyacetone phosphate as substrates, resulting from enzyme-catalyzed isomerization of RBP and G3P, respectively. In Thermus thermophilus (strain ATCC BAA-163 / DSM 7039 / HB27), this protein is Pyridoxal 5'-phosphate synthase subunit PdxS.